The following is a 757-amino-acid chain: 17S U2 SnRNP complex component HTATSF1 (757 aa).

2 disordered regions span residues 1–54 (MSGN…YEWD) and 80–123 (SDGA…KAES). Residue S2 is modified to N-acetylserine. Residues 80–94 (SDGASSSTANVQDAN) show a composition bias toward polar residues. Residues 97–123 (AVEEPPQKEVPETPDSKRKGEKRKAES) are compositionally biased toward basic and acidic residues. RRM domains lie at 134–219 (TNVY…VAKF) and 265–350 (RVVI…AWDG). Positions 260–354 (RLRHERVVIL…AQAWDGTTDY (95 aa)) are U2AF homology motif (UHM). K298 carries the N6-acetyllysine modification. Positions 382-757 (GLRRMDSIAG…SSSDDDDDEV (376 aa)) are mediates interaction with the P-TEFb complex. The tract at residues 383 to 417 (LRRMDSIAGSERPGPSRMRHFSEHPSMSNMKAQEA) is disordered. Phosphoserine is present on residues S388, S404, S408, and S410. Positions 407-417 (PSMSNMKAQEA) are enriched in polar residues. K431 is covalently cross-linked (Glycyl lysine isopeptide (Lys-Gly) (interchain with G-Cter in SUMO2)). The interval 432–757 (FEKAEEGGES…SSSDDDDDEV (326 aa)) is disordered. Phosphoserine is present on residues S441, S446, S519, and S528. 2 stretches are compositionally biased toward basic and acidic residues: residues 445-483 (ASEKDAKEGGSDGDHPEREGGEGCSKKENEEGCPERALE) and 497-538 (GPER…KKES). The segment covering 539-551 (EDDDSEEESEEDS) has biased composition (acidic residues). Basic and acidic residues-rich tracts occupy residues 552–585 (SEKQSQDGSDKEIEENGVKKDVDQDVSDKEFPED) and 595–609 (TDKSEFDEGSERVLD). Phosphoserine is present on residues S556, S560, S578, S598, S604, S613, S621, S645, S679, S705, S724, and S749. Composition is skewed to acidic residues over residues 610–635 (EEGSEREFEEDSDEKEEEGDDDEEEV), 643–671 (DDSDDIEEEEEADEKECEDADDKEEDNDI), and 678–688 (DSDEKEDEEDT). Basic and acidic residues-rich tracts occupy residues 689–709 (DGKKDDDASDKVFEDNSNEKL) and 716–737 (PNEKLFDDSDERGTVGNVKEDG). Positions 738 to 749 (SQSTDSSFALSS) are enriched in low complexity.

Belongs to the HTATSF1 family. As to quaternary structure, component of the 17S U2 SnRNP complex, a ribonucleoprotein complex that contains small nuclear RNA (snRNA) U2 and a number of specific proteins. Within the 17S U2 SnRNP complex, interacts (via UHM region) directly with SF3B1. Component of a complex which is at least composed of HTATSF1/Tat-SF1, the P-TEFb complex components CDK9 and CCNT1, RNA polymerase II, SUPT5H, and NCL/nucleolin. Interacts with GTF2F2/RAP30 and POLR2A. Interacts with TCERG1/CA150. Interacts with (poly-ADP-ribosylated) RPA1; promoting HTATSF1 recruitment to DNA damage sites. Interacts (when phosphorylated) with TOPBP1; promoting recruitment of TOPBP1 to DNA damage sites during S-phase. Phosphorylation at Ser-749 by CK2 during S-phase in response to DNA damage promotes interaction with TOPBP1 and double-strand break (DSB) repair via homologous recombination.

Its subcellular location is the nucleus. The protein resides in the chromosome. Component of the 17S U2 SnRNP complex of the spliceosome, a large ribonucleoprotein complex that removes introns from transcribed pre-mRNAs. The 17S U2 SnRNP complex (1) directly participates in early spliceosome assembly and (2) mediates recognition of the intron branch site during pre-mRNA splicing by promoting the selection of the pre-mRNA branch-site adenosine, the nucleophile for the first step of splicing. Within the 17S U2 SnRNP complex, HTATSF1 is required to stabilize the branchpoint-interacting stem loop. HTATSF1 is displaced from the 17S U2 SnRNP complex before the stable addition of the 17S U2 SnRNP complex to the spliceosome, destabilizing the branchpoint-interacting stem loop and allowing to probe intron branch site sequences. Also acts as a regulator of transcriptional elongation, possibly by mediating the reciprocal stimulatory effect of splicing on transcriptional elongation. Involved in double-strand break (DSB) repair via homologous recombination in S-phase by promoting the recruitment of TOPBP1 to DNA damage sites. Mechanistically, HTATSF1 is (1) recruited to DNA damage sites in S-phase via interaction with poly-ADP-ribosylated RPA1 and (2) phosphorylated by CK2, promoting recruitment of TOPBP1, thereby facilitating RAD51 nucleofilaments formation and RPA displacement, followed by homologous recombination. This Mus musculus (Mouse) protein is 17S U2 SnRNP complex component HTATSF1 (Htatsf1).